A 200-amino-acid chain; its full sequence is Anthranilate synthase component 2, pyocyanine specific (200 aa).

Residues 2 to 195 (RITLLDNFDS…LLWCGALAVR (194 aa)) enclose the Glutamine amidotransferase type-1 domain. Residue 56–58 (GPG) coordinates L-glutamine. Cysteine 83 functions as the Nucleophile; for GATase activity in the catalytic mechanism. L-glutamine contacts are provided by residues glutamine 87 and 133 to 134 (SL). Residues histidine 169 and glutamate 171 each act as for GATase activity in the active site.

Heterotetramer consisting of two non-identical subunits: a beta subunit (PhnB) and a large alpha subunit (PhnA).

The enzyme catalyses chorismate + L-glutamine = anthranilate + pyruvate + L-glutamate + H(+). It participates in secondary metabolite biosynthesis; pyocyanine biosynthesis. In terms of biological role, part of a heterotetrameric complex that catalyzes the two-step biosynthesis of anthranilate, a precursor for Pseudomonas quinolone signal (2-heptyl-3-hydroxy-4-quinolone; PQS) production which is required to induce the genes for the biosynthesis of the virulence factor pyocyanine (PCN), a characteristic blue-green phenazine pigment produced by P.aeruginosa. In the first step, the glutamine-binding beta subunit (PhnB) of anthranilate synthase (AS) provides the glutamine amidotransferase activity which generates ammonia as a substrate that, along with chorismate, is used in the second step, catalyzed by the large alpha subunit of AS (PhnA) to produce anthranilate. This is Anthranilate synthase component 2, pyocyanine specific from Pseudomonas aeruginosa (strain ATCC 15692 / DSM 22644 / CIP 104116 / JCM 14847 / LMG 12228 / 1C / PRS 101 / PAO1).